The sequence spans 139 residues: Probable disulfide formation protein C (139 aa).

A helical transmembrane segment spans residues 8-27; it reads EYALLTAWGASFIATLGSLY. The cysteines at positions 37 and 40 are disulfide-linked. 2 consecutive transmembrane segments (helical) span residues 42 to 61 and 68 to 85; these read YQRIFMYPFVLWLGIAVAKK and YSLPIASIGACISLYHYA. A disulfide bridge links cysteine 99 with cysteine 104. The chain crosses the membrane as a helical span at residues 113 to 135; that stretch reads GFVTIPFLALIGFITIAVCSFIV.

It belongs to the DsbB family. BdbC subfamily.

It localises to the cell membrane. In terms of biological role, required for disulfide bond formation in some proteins. The polypeptide is Probable disulfide formation protein C (Bacillus cereus (strain ATCC 14579 / DSM 31 / CCUG 7414 / JCM 2152 / NBRC 15305 / NCIMB 9373 / NCTC 2599 / NRRL B-3711)).